A 513-amino-acid chain; its full sequence is Maturase K (513 aa).

The protein belongs to the intron maturase 2 family. MatK subfamily.

It is found in the plastid. The protein localises to the chloroplast. Functionally, usually encoded in the trnK tRNA gene intron. Probably assists in splicing its own and other chloroplast group II introns. The sequence is that of Maturase K from Pinus parviflora (Japanese white pine).